Here is a 394-residue protein sequence, read N- to C-terminus: Argininosuccinate synthase (394 aa).

8–16 is an ATP binding site; sequence AYSGGLDTS. 2 residues coordinate L-citrulline: Y86 and S91. G116 provides a ligand contact to ATP. 3 residues coordinate L-aspartate: T118, N122, and D123. Residue N122 participates in L-citrulline binding. The L-citrulline site is built by R126, S172, S181, E257, and Y269.

Belongs to the argininosuccinate synthase family. Type 1 subfamily. As to quaternary structure, homotetramer.

It is found in the cytoplasm. It catalyses the reaction L-citrulline + L-aspartate + ATP = 2-(N(omega)-L-arginino)succinate + AMP + diphosphate + H(+). The protein operates within amino-acid biosynthesis; L-arginine biosynthesis; L-arginine from L-ornithine and carbamoyl phosphate: step 2/3. This chain is Argininosuccinate synthase, found in Methanosarcina mazei (strain ATCC BAA-159 / DSM 3647 / Goe1 / Go1 / JCM 11833 / OCM 88) (Methanosarcina frisia).